The primary structure comprises 456 residues: Hydroxyproline dehydrogenase (456 aa).

N6-acetyllysine is present on residues Lys310 and Lys320.

The protein belongs to the proline oxidase family. The cofactor is FAD.

The catalysed reaction is trans-4-hydroxy-L-proline + a quinone = (3R,5S)-1-pyrroline-3-hydroxy-5-carboxylate + a quinol + H(+). It carries out the reaction L-proline + a quinone = (S)-1-pyrroline-5-carboxylate + a quinol + H(+). Its function is as follows. Dehydrogenase that converts trans-4-L-hydroxyproline to delta-1-pyrroline-3-hydroxy-5-carboxylate (Hyp) using ubiquinone-10 as the terminal electron acceptor. Can also use proline as a substrate but with a very much lower efficiency. Does not react with other diastereomers of Hyp: trans-4-D-hydroxyproline and cis-4-L-hydroxyproline. Ubiquininone analogs such as menadione, duroquinone and ubiquinone-1 react more efficiently than oxygen as the terminal electron acceptor during catalysis. This Rattus norvegicus (Rat) protein is Hydroxyproline dehydrogenase.